Reading from the N-terminus, the 196-residue chain is uncharacterized protein (196 aa).

Belongs to the flavoredoxin family. Requires FMN as cofactor.

This is an uncharacterized protein from Aquifex aeolicus (strain VF5).